Reading from the N-terminus, the 195-residue chain is Large ribosomal subunit protein uL5 (195 aa).

It belongs to the universal ribosomal protein uL5 family. As to quaternary structure, part of the 50S ribosomal subunit; part of the 5S rRNA/L5/L18/L25 subcomplex. Contacts the 5S rRNA and the P site tRNA. Forms a bridge to the 30S subunit in the 70S ribosome.

In terms of biological role, this is one of the proteins that bind and probably mediate the attachment of the 5S RNA into the large ribosomal subunit, where it forms part of the central protuberance. In the 70S ribosome it contacts protein S13 of the 30S subunit (bridge B1b), connecting the 2 subunits; this bridge is implicated in subunit movement. Contacts the P site tRNA; the 5S rRNA and some of its associated proteins might help stabilize positioning of ribosome-bound tRNAs. The polypeptide is Large ribosomal subunit protein uL5 (Pelodictyon phaeoclathratiforme (strain DSM 5477 / BU-1)).